The following is a 172-amino-acid chain: Translocon-associated protein subunit delta (172 aa).

The N-terminal stretch at 1 to 23 (MAAMASFGALALLLLSGLSCCSE) is a signal peptide. Residues 24–143 (ACLEPQITPS…SVDHRGTWNG (120 aa)) lie on the Lumenal side of the membrane. An intrachain disulfide couples C25 to C56. K72 participates in a covalent cross-link: Glycyl lysine isopeptide (Lys-Gly) (interchain with G-Cter in ubiquitin). Residues 144–164 (PWVSTEVLAAVIGIVIYYLAF) form a helical membrane-spanning segment. Over 165-172 (SAKSHIQA) the chain is Cytoplasmic.

Belongs to the TRAP-delta family. In terms of assembly, heterotetramer of TRAP-alpha, TRAP-beta, TRAP-delta and TRAP-gamma.

It localises to the endoplasmic reticulum membrane. TRAP proteins are part of a complex whose function is to bind calcium to the ER membrane and thereby regulate the retention of ER resident proteins. The protein is Translocon-associated protein subunit delta (Ssr4) of Mus musculus (Mouse).